Here is a 291-residue protein sequence, read N- to C-terminus: D-alanyl-D-alanine carboxypeptidase (291 aa).

An N-terminal signal peptide occupies residues 1–29 (MRLRRAAATVITTGALLAAGTLGATPATA). Catalysis depends on serine 64, which acts as the Acyl-ester intermediate. The active-site Proton acceptor is lysine 67. The active site involves serine 125. Lysine 242 contacts substrate.

Belongs to the peptidase S11 family.

Its subcellular location is the secreted. The enzyme catalyses Preferential cleavage: (Ac)2-L-Lys-D-Ala-|-D-Ala. Also transpeptidation of peptidyl-alanyl moieties that are N-acyl substituents of D-alanine.. The protein operates within cell wall biogenesis; peptidoglycan biosynthesis. Its function is as follows. Removes C-terminal D-alanyl residues from sugar-peptide cell wall precursors. The protein is D-alanyl-D-alanine carboxypeptidase of Streptomyces sp. (strain K15).